Here is a 142-residue protein sequence, read N- to C-terminus: Putative pre-16S rRNA nuclease (142 aa).

The protein belongs to the YqgF nuclease family.

It is found in the cytoplasm. In terms of biological role, could be a nuclease involved in processing of the 5'-end of pre-16S rRNA. This is Putative pre-16S rRNA nuclease from Mycoplasmoides gallisepticum (strain R(low / passage 15 / clone 2)) (Mycoplasma gallisepticum).